Reading from the N-terminus, the 133-residue chain is Small ribosomal subunit protein uS8 (133 aa).

The tract at residues 1–28 (MANHDPISDMLTRIRNASEKRHEKTKVP) is disordered. Positions 16–26 (NASEKRHEKTK) are enriched in basic and acidic residues.

The protein belongs to the universal ribosomal protein uS8 family. In terms of assembly, part of the 30S ribosomal subunit. Contacts proteins S5 and S12.

One of the primary rRNA binding proteins, it binds directly to 16S rRNA central domain where it helps coordinate assembly of the platform of the 30S subunit. The sequence is that of Small ribosomal subunit protein uS8 from Prochlorococcus marinus (strain NATL1A).